The following is a 568-amino-acid chain: Kinetochore protein NDC80 homolog (568 aa).

The interval 1 to 59 (MRGGAAGKRRTTVGFGGAPPPPPPSIEQQRHLFNSRDSDASFASSRPSSIGLGGRGASD) is disordered. The segment covering 28–39 (QQRHLFNSRDSD) has biased composition (basic and acidic residues). Residues 40 to 49 (ASFASSRPSS) are compositionally biased toward low complexity. Coiled-coil stretches lie at residues 241–334 (KESL…AEVA) and 433–469 (IESKRSLLGSIQLQINDLEEKMKLVKKETQELSTKCD).

This sequence belongs to the NDC80/HEC1 family. In terms of assembly, component of the NDC80 complex, which consists of NDC80, NUF2, SPC24 and SPC25.

It is found in the chromosome. The protein resides in the centromere. Its function is as follows. Acts as a component of the essential kinetochore-associated NDC80 complex, which is required for chromosome segregation and spindle checkpoint activity to ensure proper cell division. This chain is Kinetochore protein NDC80 homolog, found in Arabidopsis thaliana (Mouse-ear cress).